Reading from the N-terminus, the 667-residue chain is Leucine-rich repeat-containing protein 43 (667 aa).

A compositionally biased stretch (polar residues) spans methionine 1–tyrosine 11. The disordered stretch occupies residues methionine 1–threonine 24. LRR repeat units lie at residues lysine 148–proline 169, threonine 170–proline 191, arginine 194–tyrosine 213, and glutamine 221–leucine 242. One can recognise an LRRCT domain in the interval asparagine 256–leucine 294. Disordered regions lie at residues phenylalanine 374–methionine 407, glutamate 533–proline 570, and serine 616–glutamine 640. The segment covering threonine 377–proline 386 has biased composition (acidic residues). Basic residues predominate over residues arginine 390–phenylalanine 399. The span at lysine 540 to aspartate 553 shows a compositional bias: basic and acidic residues. Residues lysine 617–arginine 627 are compositionally biased toward basic residues.

The chain is Leucine-rich repeat-containing protein 43 (Lrrc43) from Mus musculus (Mouse).